A 477-amino-acid polypeptide reads, in one-letter code: MKSLPILLLLCVAVCSAYPLDGAARGEDTSMNLVQKYLENYYDLKKDVKQFVRRKDSGPVVKKIREMQKFLGLEVTGKLDSDTLEVMRKPRCGVPDVGHFRTFPGIPKWRKTHLTYRIVNYTPDLPKDAVDSAVEKALKVWEEVTPLTFSRLYEGEADIMISFAVREHGDFYPFDGPGNVLAHAYAPGPGINGDAHFDDDEQWTKDTTGTNLFLVAAHEIGHSLGLFHSANTEALMYPLYHSLTDLTRFRLSQDDINGIQSLYGPPPDSPETPLVPTEPVPPEPGTPANCDPALSFDAVSTLRGEILIFKDRHFWRKSLRKLEPELHLISSFWPSLPSGVDAAYEVTSKDLVFIFKGNQFWAIRGNEVRAGYPRGIHTLGFPPTVRKIDAAISDKEKNKTYFFVEDKYWRFDEKRNSMEPGFPKQIAEDFPGIDSKIDAVFEEFGFFYFFTGSSQLEFDPNAKKVTHTLKSNSWLNC.

The first 17 residues, 1-17 (MKSLPILLLLCVAVCSA), serve as a signal peptide directing secretion. Positions 18 to 99 (YPLDGAARGE…PRCGVPDVGH (82 aa)) are cleaved as a propeptide — activation peptide. A Cysteine switch motif is present at residues 90 to 97 (PRCGVPDV). Residue C92 coordinates Zn(2+). Ca(2+)-binding residues include D124 and D158. H168 and D170 together coordinate Zn(2+). Positions 175, 176, 178, and 180 each coordinate Ca(2+). Position 183 (H183) interacts with Zn(2+). Ca(2+) contacts are provided by G190, N192, and D194. H196 is a Zn(2+) binding site. 3 residues coordinate Ca(2+): D198, D199, and E201. H218 is a Zn(2+) binding site. E219 is an active-site residue. Residues H222 and H228 each contribute to the Zn(2+) site. A disordered region spans residues 262–287 (LYGPPPDSPETPLVPTEPVPPEPGTP). The segment covering 276–285 (PTEPVPPEPG) has biased composition (pro residues). Hemopexin repeat units follow at residues 287–336 (PANC…WPSL), 337–383 (PSGV…GFPP), 385–433 (VRKI…FPGI), and 434–477 (DSKI…WLNC). The cysteines at positions 290 and 477 are disulfide-linked. D297 is a binding site for Ca(2+). D389 and D438 together coordinate Ca(2+).

Belongs to the peptidase M10A family. Ca(2+) is required as a cofactor. Requires Zn(2+) as cofactor. Post-translationally, directly cleaved by HTRA2 to produce active form.

Its subcellular location is the secreted. It is found in the extracellular space. The protein resides in the extracellular matrix. It localises to the nucleus. The protein localises to the cytoplasm. The catalysed reaction is Preferential cleavage where P1', P2' and P3' are hydrophobic residues.. Its activity is regulated as follows. Enzymatic activity is activated by HTRA2 in dopaminergic cells upon mitochondrial stress. Its function is as follows. Metalloproteinase with a rather broad substrate specificity that can degrade fibronectin, laminin, gelatins of type I, III, IV, and V; collagens III, IV, X, and IX, and cartilage proteoglycans. Activates different molecules including growth factors, plasminogen or other matrix metalloproteinases such as MMP9. Once released into the extracellular matrix (ECM), the inactive pro-enzyme is activated by the plasmin cascade signaling pathway. Also acts intracellularly. For example, in dopaminergic neurons, gets activated by the serine protease HTRA2 upon stress and plays a pivotal role in DA neuronal degeneration by mediating microglial activation and alpha-synuclein/SNCA cleavage. In addition, plays a role in immune response and possesses antiviral activity against various viruses such as vesicular stomatitis virus, influenza A virus (H1N1) and human herpes virus 1. Mechanistically, translocates from the cytoplasm into the cell nucleus upon virus infection to influence NF-kappa-B activities. This Homo sapiens (Human) protein is Stromelysin-1 (MMP3).